A 361-amino-acid polypeptide reads, in one-letter code: Adenosine kinase (361 aa).

A Nuclear localization signal motif is present at residues 7-15; that stretch reads PKPKKLKVE. Aspartate 34 contacts adenosine. Serine 48 is a Mg(2+) binding site. Phosphotyrosine is present on tyrosine 76. The Mg(2+) site is built by aspartate 146 and asparagine 147. Glutamine 305 is a binding site for adenosine. Aspartate 316 is a catalytic residue. The active-site Proton acceptor is aspartate 316.

The protein belongs to the carbohydrate kinase PfkB family. Monomer. Mg(2+) is required as a cofactor. In terms of processing, the N-terminus is blocked.

It localises to the nucleus. It carries out the reaction adenosine + ATP = AMP + ADP + H(+). It participates in purine metabolism; AMP biosynthesis via salvage pathway; AMP from adenosine: step 1/1. With respect to regulation, activity is inhibited by 5-iodotubercidin and 5'-amino-5'-deoxyadenosine. In terms of biological role, catalyzes the phosphorylation of the purine nucleoside adenosine at the 5' position in an ATP-dependent manner. Serves as a potential regulator of concentrations of extracellular adenosine and intracellular adenine nucleotides. This chain is Adenosine kinase (ADK), found in Cricetulus griseus (Chinese hamster).